A 742-amino-acid polypeptide reads, in one-letter code: UPF0313 protein MA_4618 (742 aa).

The interval 1-125 (MGVRKQTMVK…SFSSSLPASK (125 aa)) is disordered. The interval 1 to 128 (MGVRKQTMVK…SSLPASKFLP (128 aa)) is unknown. Basic and acidic residues-rich tracts occupy residues 17-40 (ENKKFTREKKDKEKDKKPDRERAG) and 49-73 (KKVETGKKGKLGRKSEGKAEEKAEG). A compositionally biased stretch (basic residues) spans 106 to 115 (TGKKEKKQKK). Residues 129–742 (MSPEEVKARG…KCLIRRKEKQ (614 aa)) are UPF0313. A Radical SAM core domain is found at 438-707 (ALEMVKFSLT…AMQRALMHYR (270 aa)). Positions 452, 456, and 459 each coordinate [4Fe-4S] cluster.

This sequence in the C-terminal section; belongs to the UPF0313 family. The cofactor is [4Fe-4S] cluster.

The chain is UPF0313 protein MA_4618 from Methanosarcina acetivorans (strain ATCC 35395 / DSM 2834 / JCM 12185 / C2A).